Here is a 532-residue protein sequence, read N- to C-terminus: Intercellular adhesion molecule 1 (532 aa).

The first 27 residues, 1–27 (MAPSSPRPALPALLVLLGALFPGPGNA), serve as a signal peptide directing secretion. Topologically, residues 28-480 (QTSVSPPKVI…TVNVLSPRYE (453 aa)) are extracellular. 2 consecutive Ig-like C2-type domains span residues 41–103 (GGSV…QSTA) and 128–193 (GKDL…LDLR). 3 disulfides stabilise this stretch: Cys48/Cys92, Cys52/Cys96, and Cys135/Cys186. A Cell attachment site; atypical motif is present at residues 152 to 154 (RGE). Asn202 and Asn267 each carry an N-linked (GlcNAc...) asparagine glycan. Ig-like C2-type domains follow at residues 230–297 (DTQG…LGTQ) and 325–378 (GTEV…LEVA). 2 disulfide bridges follow: Cys237–Cys290 and Cys332–Cys371. 2 N-linked (GlcNAc...) asparagine glycosylation sites follow: Asn385 and Asn406. 3 disulfide bridges follow: Cys403/Cys419, Cys419/Cys457, and Cys431/Cys457. In terms of domain architecture, Ig-like C2-type 5 spans 412–464 (NSQQTPMCQAWGNPLPELKCLKDGTFPLPVGESVTVTRDLEGTYLCRARSTQG). The helical transmembrane segment at 481 to 503 (FVIIAVVAAAVIMGTAGLSTYLY) threads the bilayer. Over 504–532 (NRQRKIRKYRLQQAQKGTPMKPNTQATPP) the chain is Cytoplasmic. 2 positions are modified to phosphothreonine: Thr521 and Thr530.

This sequence belongs to the immunoglobulin superfamily. ICAM family. In terms of assembly, homodimer. Interacts with MUC1 and promotes cell aggregation in epithelial cells. Interacts with ARHGEF26/SGEF. Interacts (on T cell side) with CD81, CD247 and CD9 at immunological synapses between antigen-presenting cells and T cells. In terms of processing, monoubiquitinated, which is promoted by MARCH9 and leads to endocytosis.

The protein resides in the membrane. ICAM proteins are ligands for the leukocyte adhesion protein LFA-1 (integrin alpha-L/beta-2). During leukocyte trans-endothelial migration, ICAM1 engagement promotes the assembly of endothelial apical cups through ARHGEF26/SGEF and RHOG activation. In Gorilla gorilla gorilla (Western lowland gorilla), this protein is Intercellular adhesion molecule 1 (ICAM1).